The primary structure comprises 369 residues: 2-aminoethylphosphonate--pyruvate transaminase (369 aa).

Lys193 is subject to N6-(pyridoxal phosphate)lysine.

The protein belongs to the class-V pyridoxal-phosphate-dependent aminotransferase family. PhnW subfamily. As to quaternary structure, homodimer. Pyridoxal 5'-phosphate serves as cofactor.

The catalysed reaction is (2-aminoethyl)phosphonate + pyruvate = phosphonoacetaldehyde + L-alanine. Its function is as follows. Involved in phosphonate degradation. This Pseudomonas fluorescens (strain ATCC BAA-477 / NRRL B-23932 / Pf-5) protein is 2-aminoethylphosphonate--pyruvate transaminase.